We begin with the raw amino-acid sequence, 547 residues long: Immunoglobulin epsilon heavy chain (547 aa).

Position 1 is a pyrrolidone carboxylic acid (glutamine 1). Ig-like domains are found at residues 1–120 (QVQL…TEVT), 130–223 (PSVF…KTFS), 232–329 (PTVK…KKCA), 333–437 (PRGV…TKTS), and 443–542 (PEVY…RAVS). The segment at 1 to 124 (QVQLVQSGAE…EGTEVTYTVS (124 aa)) is variable (V) domain, involved in antigen recognition. Intrachain disulfides connect cysteine 22-cysteine 96, cysteine 139-cysteine 225, cysteine 153-cysteine 207, cysteine 254-cysteine 312, cysteine 358-cysteine 418, and cysteine 464-cysteine 524. The interval 125-547 (GAWTLPSVFP…QRAVSVNPGK (423 aa)) is constant (C) domain. N-linked (GlcNAc...) asparagine glycosylation is found at asparagine 145, asparagine 173, asparagine 219, asparagine 265, asparagine 371, asparagine 383, and asparagine 394.

As to quaternary structure, immunoglobulins are composed of two identical heavy chains and two identical light chains; disulfide-linked.

Its subcellular location is the secreted. It is found in the cell membrane. In terms of biological role, immunoglobulins, also known as antibodies, are membrane-bound or secreted glycoproteins produced by B lymphocytes. In the recognition phase of humoral immunity, the membrane-bound immunoglobulins serve as receptors which, upon binding of a specific antigen, trigger the clonal expansion and differentiation of B lymphocytes into immunoglobulins-secreting plasma cells. Secreted immunoglobulins mediate the effector phase of humoral immunity, which results in the elimination of bound antigens. The antigen binding site is formed by the variable domain of one heavy chain, together with that of its associated light chain. Thus, each immunoglobulin has two antigen binding sites with remarkable affinity for a particular antigen. The variable domains are assembled by a process called V-(D)-J rearrangement and can then be subjected to somatic hypermutations which, after exposure to antigen and selection, allow affinity maturation for a particular antigen. The chain is Immunoglobulin epsilon heavy chain from Homo sapiens (Human).